A 147-amino-acid chain; its full sequence is Hemoglobin subunit beta (147 aa).

V2 bears the N-acetylvaline mark. The region spanning 3 to 147 (HLTGEEKAAV…VANALAHKYH (145 aa)) is the Globin domain. Position 13 is a phosphothreonine (T13). S45 carries the post-translational modification Phosphoserine. K60 is modified (N6-acetyllysine). Residue H64 participates in heme b binding. K83 bears the N6-acetyllysine mark. Residue H93 participates in heme b binding. At C94 the chain carries S-nitrosocysteine. N6-acetyllysine is present on K145.

The protein belongs to the globin family. As to quaternary structure, heterotetramer of two alpha chains and two beta chains. In terms of tissue distribution, red blood cells.

In terms of biological role, involved in oxygen transport from the lung to the various peripheral tissues. The protein is Hemoglobin subunit beta (HBB) of Ateles belzebuth (White-bellied spider monkey).